The chain runs to 114 residues: Class I hydrophobin 1 (114 aa).

An N-terminal signal peptide occupies residues 1–20 (MQFTKMSAFATLALATLAAA). Intrachain disulfides connect cysteine 33–cysteine 93, cysteine 40–cysteine 87, cysteine 41–cysteine 74, and cysteine 94–cysteine 107.

The protein belongs to the fungal hydrophobin family. In terms of assembly, self-assembles to form functional amyloid fibrils called rodlets. Self-assembly into fibrillar rodlets occurs spontaneously at hydrophobic:hydrophilic interfaces and the rodlets further associate laterally to form amphipathic monolayers.

The protein resides in the secreted. It localises to the cell wall. Its function is as follows. Aerial growth, conidiation, and dispersal of filamentous fungi in the environment rely upon a capability of their secreting small amphipathic proteins called hydrophobins (HPBs) with low sequence identity. Class I can self-assemble into an outermost layer of rodlet bundles on aerial cell surfaces, conferring cellular hydrophobicity that supports fungal growth, development and dispersal; whereas Class II form highly ordered films at water-air interfaces through intermolecular interactions but contribute nothing to the rodlet structure. Pnh1 is a class I hydrophobin that might be involved in the attachment of the hydrophilic wall of hyphae to the hydrophobic surface of wood under inorganic phosphate (Pi)-deficient conditions and enable the mycelium to degrade efficiently the components of wood and to acquire nutrients containing Pi. This Pholiota nameko protein is Class I hydrophobin 1.